Consider the following 284-residue polypeptide: ATP phosphoribosyltransferase (284 aa).

Belongs to the ATP phosphoribosyltransferase family. Long subfamily. Mg(2+) is required as a cofactor.

The protein localises to the cytoplasm. It catalyses the reaction 1-(5-phospho-beta-D-ribosyl)-ATP + diphosphate = 5-phospho-alpha-D-ribose 1-diphosphate + ATP. The protein operates within amino-acid biosynthesis; L-histidine biosynthesis; L-histidine from 5-phospho-alpha-D-ribose 1-diphosphate: step 1/9. Its activity is regulated as follows. Feedback inhibited by histidine. Catalyzes the condensation of ATP and 5-phosphoribose 1-diphosphate to form N'-(5'-phosphoribosyl)-ATP (PR-ATP). Has a crucial role in the pathway because the rate of histidine biosynthesis seems to be controlled primarily by regulation of HisG enzymatic activity. The protein is ATP phosphoribosyltransferase of Methanococcoides burtonii (strain DSM 6242 / NBRC 107633 / OCM 468 / ACE-M).